A 463-amino-acid chain; its full sequence is Chromosomal replication initiator protein DnaA (463 aa).

The domain I, interacts with DnaA modulators stretch occupies residues 1–83; that stretch reads MSTNQIILTD…LQLFQHYNNT (83 aa). The tract at residues 83–124 is domain II; the sequence is TIKSIEIITKELPGTTQTVTELPTKTFADIGSSELNSENIFS. The tract at residues 125-343 is domain III, AAA+ region; that stretch reads TLDARFTFDN…GALNKVIAHS (219 aa). ATP is bound by residues Gly171, Gly173, Lys174, and Thr175. The interval 344–463 is domain IV, binds dsDNA; sequence NFTLKEITLE…INLLMKILQN (120 aa).

Belongs to the DnaA family. In terms of assembly, oligomerizes as a right-handed, spiral filament on DNA at oriC.

It localises to the cytoplasm. Functionally, plays an essential role in the initiation and regulation of chromosomal replication. ATP-DnaA binds to the origin of replication (oriC) to initiate formation of the DNA replication initiation complex once per cell cycle. Binds the DnaA box (a 9 base pair repeat at the origin) and separates the double-stranded (ds)DNA. Forms a right-handed helical filament on oriC DNA; dsDNA binds to the exterior of the filament while single-stranded (ss)DNA is stabiized in the filament's interior. The ATP-DnaA-oriC complex binds and stabilizes one strand of the AT-rich DNA unwinding element (DUE), permitting loading of DNA polymerase. After initiation quickly degrades to an ADP-DnaA complex that is not apt for DNA replication. Binds acidic phospholipids. The sequence is that of Chromosomal replication initiator protein DnaA from Rickettsia peacockii (strain Rustic).